The chain runs to 273 residues: Probable cysteine-rich repeat secretory protein 6 (273 aa).

Positions 1–21 (MTRIIDVSLFCFFLFSLGAMS) are cleaved as a signal peptide. 2 Gnk2-homologous domains span residues 22-122 (QPSQ…DNSF) and 128-241 (DSPA…ISAL).

It belongs to the cysteine-rich repeat secretory protein family.

It is found in the secreted. This Arabidopsis thaliana (Mouse-ear cress) protein is Probable cysteine-rich repeat secretory protein 6 (CRRSP6).